A 61-amino-acid chain; its full sequence is Aerolysin regulatory protein (61 aa).

Basic residues predominate over residues 1 to 14 (MMIKRHLPQPRHRE). Positions 1-61 (MMIKRHLPQP…GQTHTGPQIR (61 aa)) are disordered. The span at 51-61 (DGQTHTGPQIR) shows a compositional bias: polar residues.

Regulation of the expression of aerolysin. This chain is Aerolysin regulatory protein (aerC), found in Aeromonas sobria.